A 60-amino-acid chain; its full sequence is Large ribosomal subunit protein bL33 (60 aa).

It belongs to the bacterial ribosomal protein bL33 family.

The polypeptide is Large ribosomal subunit protein bL33 (Christiangramia forsetii (strain DSM 17595 / CGMCC 1.15422 / KT0803) (Gramella forsetii)).